The following is a 398-amino-acid chain: 1-deoxy-D-xylulose 5-phosphate reductoisomerase (398 aa).

Positions 10, 11, 12, 13, 36, 37, 38, and 124 each coordinate NADPH. Lys125 lines the 1-deoxy-D-xylulose 5-phosphate pocket. Glu126 contributes to the NADPH binding site. Residue Asp150 participates in Mn(2+) binding. Residues Ser151, Glu152, Ser186, and His209 each coordinate 1-deoxy-D-xylulose 5-phosphate. Glu152 lines the Mn(2+) pocket. Gly215 is an NADPH binding site. 1-deoxy-D-xylulose 5-phosphate contacts are provided by Ser222, Asn227, Lys228, and Glu231. Position 231 (Glu231) interacts with Mn(2+).

Belongs to the DXR family. In terms of assembly, homodimer. It depends on Mg(2+) as a cofactor. Mn(2+) is required as a cofactor.

It carries out the reaction 2-C-methyl-D-erythritol 4-phosphate + NADP(+) = 1-deoxy-D-xylulose 5-phosphate + NADPH + H(+). It participates in isoprenoid biosynthesis; isopentenyl diphosphate biosynthesis via DXP pathway; isopentenyl diphosphate from 1-deoxy-D-xylulose 5-phosphate: step 1/6. Catalyzes the NADPH-dependent rearrangement and reduction of 1-deoxy-D-xylulose-5-phosphate (DXP) to 2-C-methyl-D-erythritol 4-phosphate (MEP). This is 1-deoxy-D-xylulose 5-phosphate reductoisomerase from Yersinia pseudotuberculosis serotype IB (strain PB1/+).